The primary structure comprises 340 residues: MRVYYDRDCDVNLIKDKKIAMLGYGSQGHAHALNLRDSGAKNLVVALREGSASAKKAEAEGLKVMGIAEAAAWADLIMFTMPDELQAETYRKYVHDNLREGAAIAFAHGLNVHFGLIEPKPGVDVIMMAPKGPGHTVRGEYTKGGGVPCLVAVHQDATGKAMDIGLSYCSAIGGGRSGIIETNFRQECETDLFGEQAVLCGGLVELIRMGFETLVEAGYEPEMAYFECLHEVKLIVDLIYEGGIANMNYSISNTAEYGEYVSGPRVLPYEETKARMKAVLTDIQTGKFVRDFMQENAVGQPFFKATRRINDEHQIEKVGEKLRGMMPWISKGKMVDKERN.

The KARI N-terminal Rossmann domain occupies 1–182; it reads MRVYYDRDCD…GGGRSGIIET (182 aa). NADP(+)-binding positions include 24-27, Arg-48, Ser-51, Ser-53, and 83-86; these read YGSQ and DELQ. Residue His-108 is part of the active site. An NADP(+)-binding site is contributed by Gly-134. Residues 183 to 329 enclose the KARI C-terminal knotted domain; that stretch reads NFRQECETDL…EKLRGMMPWI (147 aa). Residues Asp-191, Glu-195, Glu-227, and Glu-231 each contribute to the Mg(2+) site. Ser-252 contacts substrate.

Belongs to the ketol-acid reductoisomerase family. It depends on Mg(2+) as a cofactor.

The catalysed reaction is (2R)-2,3-dihydroxy-3-methylbutanoate + NADP(+) = (2S)-2-acetolactate + NADPH + H(+). The enzyme catalyses (2R,3R)-2,3-dihydroxy-3-methylpentanoate + NADP(+) = (S)-2-ethyl-2-hydroxy-3-oxobutanoate + NADPH + H(+). It participates in amino-acid biosynthesis; L-isoleucine biosynthesis; L-isoleucine from 2-oxobutanoate: step 2/4. The protein operates within amino-acid biosynthesis; L-valine biosynthesis; L-valine from pyruvate: step 2/4. In terms of biological role, involved in the biosynthesis of branched-chain amino acids (BCAA). Catalyzes an alkyl-migration followed by a ketol-acid reduction of (S)-2-acetolactate (S2AL) to yield (R)-2,3-dihydroxy-isovalerate. In the isomerase reaction, S2AL is rearranged via a Mg-dependent methyl migration to produce 3-hydroxy-3-methyl-2-ketobutyrate (HMKB). In the reductase reaction, this 2-ketoacid undergoes a metal-dependent reduction by NADPH to yield (R)-2,3-dihydroxy-isovalerate. This is Ketol-acid reductoisomerase (NADP(+)) from Paracoccus denitrificans (strain Pd 1222).